Consider the following 123-residue polypeptide: Small ribosomal subunit protein uS12 (123 aa).

Asp89 carries the 3-methylthioaspartic acid modification.

The protein belongs to the universal ribosomal protein uS12 family. Part of the 30S ribosomal subunit. Contacts proteins S8 and S17. May interact with IF1 in the 30S initiation complex.

Functionally, with S4 and S5 plays an important role in translational accuracy. Its function is as follows. Interacts with and stabilizes bases of the 16S rRNA that are involved in tRNA selection in the A site and with the mRNA backbone. Located at the interface of the 30S and 50S subunits, it traverses the body of the 30S subunit contacting proteins on the other side and probably holding the rRNA structure together. The combined cluster of proteins S8, S12 and S17 appears to hold together the shoulder and platform of the 30S subunit. This Citrifermentans bemidjiense (strain ATCC BAA-1014 / DSM 16622 / JCM 12645 / Bem) (Geobacter bemidjiensis) protein is Small ribosomal subunit protein uS12.